A 180-amino-acid chain; its full sequence is GTP cyclohydrolase 1 (180 aa).

Positions 71, 74, and 142 each coordinate Zn(2+).

Belongs to the GTP cyclohydrolase I family. As to quaternary structure, homomer.

It carries out the reaction GTP + H2O = 7,8-dihydroneopterin 3'-triphosphate + formate + H(+). The protein operates within cofactor biosynthesis; 7,8-dihydroneopterin triphosphate biosynthesis; 7,8-dihydroneopterin triphosphate from GTP: step 1/1. This is GTP cyclohydrolase 1 from Helicobacter pylori (strain Shi470).